A 338-amino-acid chain; its full sequence is Pseudouridylate synthase TRUB1 (338 aa).

Ala-2 is modified (N-acetylalanine). Catalysis depends on Asp-109, which acts as the Nucleophile.

It belongs to the pseudouridine synthase TruB family.

Its subcellular location is the nucleus. The protein resides in the cytoplasm. It localises to the cytosol. The enzyme catalyses a uridine in mRNA = a pseudouridine in mRNA. It catalyses the reaction a uridine in tRNA = a pseudouridine in tRNA. The catalysed reaction is uridine(55) in tRNA = pseudouridine(55) in tRNA. Its function is as follows. Pseudouridine synthase that catalyzes pseudouridylation of mRNAs and tRNAs. Mediates pseudouridylation of mRNAs with the consensus sequence 5'-GUUCNANNC-3', harboring a stem-loop structure. Constitutes the major pseudouridine synthase acting on mRNAs. Also catalyzes pseudouridylation of some tRNAs, including synthesis of pseudouridine(55) from uracil-55, in the psi GC loop of a subset of tRNAs. Promotes the processing of pri-let-7 microRNAs (pri-miRNAs) independently of its RNA pseudouridylate synthase activity. Acts by binding to the stem-loop structure on pri-let-7, preventing LIN28-binding (LIN28A and/or LIN28B), thereby enhancing the interaction between pri-let-7 and the microprocessor DGCR8, which mediates miRNA maturation. This chain is Pseudouridylate synthase TRUB1, found in Mus musculus (Mouse).